We begin with the raw amino-acid sequence, 868 residues long: E3 ubiquitin-protein ligase TRIM71 (868 aa).

Residue alanine 2 is modified to N-acetylalanine. Residues 12–89 (CLLCKEMCGS…PLKLRCPVCD (78 aa)) form an RING-type zinc finger. Positions 26–41 (SSNSSASSSSSQTSTS) are enriched in low complexity. Disordered stretches follow at residues 26–50 (SSNSSASSSSSQTSTSSGGGGGGPG) and 121–186 (ADEP…GSPS). A compositionally biased stretch (basic residues) spans 142-153 (SNHRHHAHHAHP). Over residues 159–176 (APPPPLPPAPPPPAPPRS) the composition is skewed to pro residues. Positions 177–186 (APGGPAGSPS) are enriched in low complexity. The segment at 191 to 238 (RRPHGCSSCDEGNAASSRCLDCQEHLCDNCVRAHQRVRLTKDHYIERG) adopts a B box-type 1; atypical zinc-finger fold. Residues 273–314 (ERLGFCQHHDDEVLHLYCDTCSVPICRECTVGRHGGHSFVYL) form a B box-type 2 zinc finger. Zn(2+)-binding residues include cysteine 278, histidine 281, cysteine 301, and histidine 306. A coiled-coil region spans residues 391-427 (QVKAKSLYLQVEKLRQNLNKLESTISAVQQVLEEGRA). The stretch at 479 to 580 (SSGAFAPLTK…IENSPFKVVV (102 aa)) is one Filamin repeat. 6 NHL repeats span residues 593–636 (GLSF…FKPC), 640–683 (HHKF…FTFE), 687–730 (LLKF…FGPD), 734–777 (LNKY…IHPD), 781–824 (ARFL…FESN), and 828–868 (LCKF…ILIF).

The protein belongs to the TRIM/RBCC family. In terms of assembly, interacts (via NHL repeats) with AGO2; the interaction increases in presence of RNA. Interacts with HSP90AA1. Interacts (via NHL repeats) with MOV10, PABPC1, PUM1, PUM2, STAU2, XRN1 and XRN2 in an RNA-dependent manner. Interacts with SHCBP1; leading to enhance its stability. In terms of processing, autoubiquitinated.

The protein resides in the cytoplasm. Its subcellular location is the P-body. The catalysed reaction is S-ubiquitinyl-[E2 ubiquitin-conjugating enzyme]-L-cysteine + [acceptor protein]-L-lysine = [E2 ubiquitin-conjugating enzyme]-L-cysteine + N(6)-ubiquitinyl-[acceptor protein]-L-lysine.. The protein operates within protein modification; protein ubiquitination. E3 ubiquitin-protein ligase that cooperates with the microRNAs (miRNAs) machinery and promotes embryonic stem cells proliferation and maintenance. Binds to miRNAs and associates with AGO2, participating in post-transcriptional repression of transcripts such as CDKN1A. In addition, participates in post-transcriptional mRNA repression in a miRNA independent mechanism. Facilitates the G1-S transition to promote rapid embryonic stem cell self-renewal by repressing CDKN1A expression. Required to maintain proliferation and prevent premature differentiation of neural progenitor cells during early neural development: positively regulates FGF signaling by controlling the stability of SHCBP1. Specific regulator of miRNA biogenesis. Binds to miRNA MIR29A hairpin and postranscriptionally modulates MIR29A levels, which indirectly regulates TET proteins expression. This is E3 ubiquitin-protein ligase TRIM71 (TRIM71) from Bos taurus (Bovine).